The chain runs to 159 residues: Short coiled-coil protein (159 aa).

The stretch at 78–146 forms a coiled coil; the sequence is MMNADMDAVD…QYIENLMSAS (69 aa).

The protein belongs to the SCOC family. As to quaternary structure, homodimer. Interacts with ARL1, ARL2 and ARL3. Directly interacts with FEZ1 and UVRAG. The interaction with UVRAG is reduced by amino acid starvation, but the complex is stabilized in the presence of FEZ1. Interacts with NRBF2. As to expression, widely expressed with highest levels in brain, heart and skeletal muscle.

It is found in the golgi apparatus membrane. The protein localises to the golgi apparatus. The protein resides in the trans-Golgi network. It localises to the cytoplasm. Its subcellular location is the cytosol. Positive regulator of amino acid starvation-induced autophagy. The protein is Short coiled-coil protein (SCOC) of Homo sapiens (Human).